A 258-amino-acid chain; its full sequence is Adenylate kinase (258 aa).

Residue 52-57 coordinates ATP; it reads GAGKGT. The NMP stretch occupies residues 72–101; the sequence is ATGDMLRSQVAKKTELGKEAKKIMDQGGLV. AMP is bound by residues T73, R78, 99–101, 128–131, and Q135; these read GLV and GFPR. Residues 169–206 form an LID region; the sequence is GRLVHPASGRSYHKVFNPPKQEMKDDITGEPLIQRSDD. Residues R170 and 179–180 contribute to the ATP site; that span reads SY. AMP is bound by residues R203 and R214. Residue Q242 participates in ATP binding.

The protein belongs to the adenylate kinase family. AK2 subfamily. In terms of assembly, monomer.

It is found in the cytoplasm. It localises to the cytosol. Its subcellular location is the mitochondrion intermembrane space. The enzyme catalyses AMP + ATP = 2 ADP. Catalyzes the reversible transfer of the terminal phosphate group between ATP and AMP. Plays an important role in cellular energy homeostasis and in adenine nucleotide metabolism. Adenylate kinase activity is critical for regulation of the phosphate utilization and the AMP de novo biosynthesis pathways. This is Adenylate kinase (adk1) from Aspergillus oryzae (strain ATCC 42149 / RIB 40) (Yellow koji mold).